Here is a 131-residue protein sequence, read N- to C-terminus: Small ribosomal subunit protein uS12c (131 aa).

Belongs to the universal ribosomal protein uS12 family. In terms of assembly, part of the 30S ribosomal subunit.

The protein localises to the plastid. The protein resides in the chloroplast. With S4 and S5 plays an important role in translational accuracy. Located at the interface of the 30S and 50S subunits. The sequence is that of Small ribosomal subunit protein uS12c (rps12) from Stigeoclonium helveticum (Green alga).